A 224-amino-acid polypeptide reads, in one-letter code: MMRVLVVEDNALLRHHLKVQLQDSGHQVDAAEDAREADYYLNEHLPDIAIVDLGLPDEDGLSLIRRWRSSDVSLPVLVLTAREGWQDKVEVLSSGADDYVTKPFHIEEVMARMQALMRRNSGLASQVINISPFQVDLSRRELSVNEEVIKLTAFEYTIMETLIRNNGKVVSKDSLMLQLYPDAELRESHTIDVLMGRLRKKIQAQYPHDVITTVRGQGYLFELR.

Positions 3–117 constitute a Response regulatory domain; the sequence is RVLVVEDNAL…EVMARMQALM (115 aa). At Asp-52 the chain carries 4-aspartylphosphate. The segment at residues 125–223 is a DNA-binding region (ompR/PhoB-type); that stretch reads SQVINISPFQ…VRGQGYLFEL (99 aa).

Phosphorylated by PhoQ.

It is found in the cytoplasm. Member of the two-component regulatory system PhoQ/PhoP which regulates the expression of genes involved in virulence and resistance to host defense antimicrobial peptides. Promotes intramacrophage survival of S.typhi. Is required to enhance bacterial resistance to bile in the human intestinal cells. In Salmonella typhi, this protein is Virulence transcriptional regulatory protein PhoP (phoP).